The primary structure comprises 367 residues: Methylated-thiol--coenzyme M methyltransferase (367 aa).

Zn(2+)-binding residues include His-236, Cys-238, and Cys-313.

It belongs to the uroporphyrinogen decarboxylase family. Homodimer. Requires Zn(2+) as cofactor.

It carries out the reaction methanethiol + coenzyme M = methyl-coenzyme M + hydrogen sulfide + H(+). Its function is as follows. Methyltransferase involved in methanogenesis from methylated-thiols. Catalyzes two successive steps: mediates the transfer of a methyl group from the substrate to the cobalt cofactor of a methylated-thiol-specific corrinoid protein (MtsB), and the subsequent transfer of the methyl group from the corrinoid protein to coenzyme M. This chain is Methylated-thiol--coenzyme M methyltransferase (mtsA), found in Methanosarcina mazei (strain ATCC BAA-159 / DSM 3647 / Goe1 / Go1 / JCM 11833 / OCM 88) (Methanosarcina frisia).